A 393-amino-acid polypeptide reads, in one-letter code: Ig heavy chain C region (393 aa).

Ig-like domains lie at 63-157 (PTVI…RNIT), 168-260 (PVIK…ASIH), and 270-370 (PSVS…RTVN). Asparagine 119, asparagine 155, asparagine 200, asparagine 230, asparagine 329, asparagine 366, asparagine 370, and asparagine 380 each carry an N-linked (GlcNAc...) asparagine glycan.

The protein is Ig heavy chain C region of Heterodontus francisci (Horn shark).